The following is a 532-amino-acid chain: Neutral amino acid transporter A (532 aa).

At methionine 1 the chain carries N-acetylmethionine. The interval 1–29 (MEKSGETNGYLDGTQAEPAAGPRTPETAM) is disordered. Residues 1–41 (MEKSGETNGYLDGTQAEPAAGPRTPETAMGKSQRCASFFRR) lie on the Cytoplasmic side of the membrane. Helical transmembrane passes span 42-62 (HALVLLTVSGVLVGAGMGAAL), 88-108 (MIILPLVVCSLVSGAASLDAS), and 119-139 (AYFGLTTLSASALAVALAFII). Residues 140 to 216 (KPGAGAQTLQ…VTKEKIPVVT (77 aa)) are Extracellular-facing. N-linked (GlcNAc...) asparagine glycans are attached at residues asparagine 201 and asparagine 206. A run of 6 helical transmembrane segments spans residues 217–237 (DVEGMNILGLVLFALVLGVAL), 257–277 (ATMVLVSWIMWYVPIGIMFLI), 298–318 (IFASMLGHVIHGGIVLPLVYF), 328–348 (FLLGLLTPFATAFATCSSSAT), 373–393 (IGATVNMDGAAIFQCVAAVFI), and 418–438 (VGAAGVPAGGVLTIAIILEAI). A disordered region spans residues 495 to 532 (EAIPNSKSEEETSPLVTHQNPAGPVAIAPELESKESVL). Phosphoserine occurs at positions 507, 527, and 530.

Belongs to the dicarboxylate/amino acid:cation symporter (DAACS) (TC 2.A.23) family. SLC1A4 subfamily.

It localises to the membrane. Its subcellular location is the melanosome. The catalysed reaction is L-threonine(in) + Na(+)(in) = L-threonine(out) + Na(+)(out). It carries out the reaction L-serine(in) + Na(+)(in) = L-serine(out) + Na(+)(out). The enzyme catalyses L-cysteine(in) + Na(+)(in) = L-cysteine(out) + Na(+)(out). It catalyses the reaction L-alanine(in) + Na(+)(in) = L-alanine(out) + Na(+)(out). The catalysed reaction is L-proline(in) + Na(+)(in) = L-proline(out) + Na(+)(out). It carries out the reaction 4-hydroxy-L-proline(in) + Na(+)(in) = 4-hydroxy-L-proline(out) + Na(+)(out). Sodium-dependent neutral amino-acid transporter that mediates transport of alanine, serine, cysteine, proline, hydroxyproline and threonine. This is Neutral amino acid transporter A (Slc1a4) from Mus musculus (Mouse).